The following is a 691-amino-acid chain: DNA ligase (691 aa).

Residues 53 to 57, 102 to 103, and Glu135 contribute to the NAD(+) site; these read DSEYD and SL. The active-site N6-AMP-lysine intermediate is the Lys137. Residues Arg158, Glu195, Lys310, and Lys334 each contribute to the NAD(+) site. Residues Cys428, Cys431, Cys446, and Cys452 each coordinate Zn(2+). Residues 613–691 form the BRCT domain; that stretch reads SEGLPLDGQT…EEEFLALVGE (79 aa).

Belongs to the NAD-dependent DNA ligase family. LigA subfamily. Mg(2+) serves as cofactor. Mn(2+) is required as a cofactor.

It catalyses the reaction NAD(+) + (deoxyribonucleotide)n-3'-hydroxyl + 5'-phospho-(deoxyribonucleotide)m = (deoxyribonucleotide)n+m + AMP + beta-nicotinamide D-nucleotide.. In terms of biological role, DNA ligase that catalyzes the formation of phosphodiester linkages between 5'-phosphoryl and 3'-hydroxyl groups in double-stranded DNA using NAD as a coenzyme and as the energy source for the reaction. It is essential for DNA replication and repair of damaged DNA. The sequence is that of DNA ligase from Psychrobacter arcticus (strain DSM 17307 / VKM B-2377 / 273-4).